Reading from the N-terminus, the 95-residue chain is Small ribosomal subunit protein uS19 (95 aa).

This sequence belongs to the universal ribosomal protein uS19 family.

Its function is as follows. Protein S19 forms a complex with S13 that binds strongly to the 16S ribosomal RNA. The sequence is that of Small ribosomal subunit protein uS19 from Syntrophobacter fumaroxidans (strain DSM 10017 / MPOB).